We begin with the raw amino-acid sequence, 119 residues long: Parathyroid hormone (119 aa).

An N-terminal signal peptide occupies residues 1-25 (MTSTKNLAKAIVILYAICFFTNSDG). Positions 26-31 (RPMMKR) are excised as a propeptide.

It belongs to the parathyroid hormone family. Interacts with PTH1R (via N-terminal extracellular domain).

The protein resides in the secreted. Its function is as follows. Parathyroid hormone elevates calcium level by dissolving the salts in bone and preventing their renal excretion. Acts by binding to its receptor, PTH1R, activating G protein-coupled receptor signaling. Stimulates [1-14C]-2-deoxy-D-glucose (2DG) transport and glycogen synthesis in osteoblastic cells. The protein is Parathyroid hormone of Gallus gallus (Chicken).